The following is a 352-amino-acid chain: DNA polymerase IV (352 aa).

Residues 4–185 (IIHVDMDCFY…LPLEKIPGVG (182 aa)) form the UmuC domain. Residues Asp-8 and Asp-103 each coordinate Mg(2+). Residue Glu-104 is part of the active site.

This sequence belongs to the DNA polymerase type-Y family. As to quaternary structure, monomer. It depends on Mg(2+) as a cofactor.

The protein resides in the cytoplasm. The enzyme catalyses DNA(n) + a 2'-deoxyribonucleoside 5'-triphosphate = DNA(n+1) + diphosphate. Its function is as follows. Poorly processive, error-prone DNA polymerase involved in untargeted mutagenesis. Copies undamaged DNA at stalled replication forks, which arise in vivo from mismatched or misaligned primer ends. These misaligned primers can be extended by PolIV. Exhibits no 3'-5' exonuclease (proofreading) activity. May be involved in translesional synthesis, in conjunction with the beta clamp from PolIII. This Pectobacterium atrosepticum (strain SCRI 1043 / ATCC BAA-672) (Erwinia carotovora subsp. atroseptica) protein is DNA polymerase IV.